A 302-amino-acid chain; its full sequence is 4-hydroxy-tetrahydrodipicolinate synthase (302 aa).

T55 is a binding site for pyruvate. Y144 serves as the catalytic Proton donor/acceptor. K172 acts as the Schiff-base intermediate with substrate in catalysis. V214 contacts pyruvate.

This sequence belongs to the DapA family. As to quaternary structure, homotetramer; dimer of dimers.

Its subcellular location is the cytoplasm. The catalysed reaction is L-aspartate 4-semialdehyde + pyruvate = (2S,4S)-4-hydroxy-2,3,4,5-tetrahydrodipicolinate + H2O + H(+). Its pathway is amino-acid biosynthesis; L-lysine biosynthesis via DAP pathway; (S)-tetrahydrodipicolinate from L-aspartate: step 3/4. In terms of biological role, catalyzes the condensation of (S)-aspartate-beta-semialdehyde [(S)-ASA] and pyruvate to 4-hydroxy-tetrahydrodipicolinate (HTPA). The chain is 4-hydroxy-tetrahydrodipicolinate synthase from Prochlorococcus marinus (strain SARG / CCMP1375 / SS120).